A 94-amino-acid chain; its full sequence is Co-chaperonin GroES (94 aa).

The protein belongs to the GroES chaperonin family. Heptamer of 7 subunits arranged in a ring. Interacts with the chaperonin GroEL.

Its subcellular location is the cytoplasm. Together with the chaperonin GroEL, plays an essential role in assisting protein folding. The GroEL-GroES system forms a nano-cage that allows encapsulation of the non-native substrate proteins and provides a physical environment optimized to promote and accelerate protein folding. GroES binds to the apical surface of the GroEL ring, thereby capping the opening of the GroEL channel. This is Co-chaperonin GroES from Geobacillus sp. (strain WCH70).